A 327-amino-acid polypeptide reads, in one-letter code: Clavesin-2 (327 aa).

Residues 96–257 (IKQALKDGFP…EFGGMLPPYD (162 aa)) enclose the CRAL-TRIO domain. Residues 288–327 (VDKELSPKSMKRSQSVVDPTALKRMDKSEEENMQPLLSLD) are disordered. S325 is modified (phosphoserine).

Forms a complex with clathrin heavy chain and gamma-adaptin. Expressed in brain with no expression detected in non-neuronal tissues (at protein level).

Its subcellular location is the golgi apparatus. It is found in the trans-Golgi network membrane. The protein resides in the early endosome membrane. The protein localises to the cytoplasmic vesicle. It localises to the clathrin-coated vesicle. Functionally, required for normal morphology of late endosomes and/or lysosomes in neurons. Binds phosphatidylinositol 3,5-bisphosphate (PtdIns(3,5)P2). The chain is Clavesin-2 from Rattus norvegicus (Rat).